Consider the following 310-residue polypeptide: Homoserine kinase (310 aa).

91–101 contributes to the ATP binding site; it reads PIGSGLGSSAC.

This sequence belongs to the GHMP kinase family. Homoserine kinase subfamily.

The protein localises to the cytoplasm. The enzyme catalyses L-homoserine + ATP = O-phospho-L-homoserine + ADP + H(+). It functions in the pathway amino-acid biosynthesis; L-threonine biosynthesis; L-threonine from L-aspartate: step 4/5. Its function is as follows. Catalyzes the ATP-dependent phosphorylation of L-homoserine to L-homoserine phosphate. The protein is Homoserine kinase of Escherichia coli O17:K52:H18 (strain UMN026 / ExPEC).